The sequence spans 508 residues: Mevalonate kinase ERG12 (508 aa).

Residues methionine 1–arginine 46 form a disordered region. Positions asparagine 10–serine 42 are enriched in low complexity. Residues lysine 68, serine 200, and glycine 205–serine 211 each bind ATP. Residues serine 211 and glutamate 256 each contribute to the Mg(2+) site. The Proton acceptor role is filled by aspartate 267.

It belongs to the GHMP kinase family. Mevalonate kinase subfamily. Homodimer. Mg(2+) is required as a cofactor.

The protein resides in the cytoplasm. It is found in the cytosol. The catalysed reaction is (R)-mevalonate + ATP = (R)-5-phosphomevalonate + ADP + H(+). It functions in the pathway isoprenoid biosynthesis; isopentenyl diphosphate biosynthesis via mevalonate pathway; isopentenyl diphosphate from (R)-mevalonate: step 1/3. Its function is as follows. Mevalonate kinase; part of the second module of ergosterol biosynthesis pathway that includes the middle steps of the pathway. ERG12 converts mevalonate into 5-phosphomevalonate. The second module is carried out in the vacuole and involves the formation of farnesyl diphosphate, which is also an important intermediate in the biosynthesis of ubiquinone, dolichol, heme and prenylated proteins. Activity by the mevalonate kinase ERG12 (FG05912) first converts mevalonate into 5-phosphomevalonate. 5-phosphomevalonate is then further converted to 5-diphosphomevalonate by the phosphomevalonate kinase ERG8 (FG09764). The diphosphomevalonate decarboxylase ERG19 (FG10424) then produces isopentenyl diphosphate. The isopentenyl-diphosphate delta-isomerase IDI1 (FG09722) then catalyzes the 1,3-allylic rearrangement of the homoallylic substrate isopentenyl (IPP) to its highly electrophilic allylic isomer, dimethylallyl diphosphate (DMAPP). Finally the farnesyl diphosphate synthase ERG20 (FG06784) catalyzes the sequential condensation of isopentenyl pyrophosphate with dimethylallyl pyrophosphate, and then with the resultant geranylpyrophosphate to the ultimate product farnesyl pyrophosphate. In Gibberella zeae (strain ATCC MYA-4620 / CBS 123657 / FGSC 9075 / NRRL 31084 / PH-1) (Wheat head blight fungus), this protein is Mevalonate kinase ERG12.